Here is a 98-residue protein sequence, read N- to C-terminus: UPF0213 protein BPUM_0019 (98 aa).

The GIY-YIG domain occupies 4–79 (HNHYFYVLKC…KTWTRKKKDL (76 aa)).

This sequence belongs to the UPF0213 family.

The chain is UPF0213 protein BPUM_0019 from Bacillus pumilus (strain SAFR-032).